Consider the following 395-residue polypeptide: S-adenosylmethionine synthase (395 aa).

H16 contacts ATP. D18 is a Mg(2+) binding site. K(+) is bound at residue E44. Positions 57 and 100 each coordinate L-methionine. The tract at residues 100 to 110 (QSPDIAQGVDR) is flexible loop. ATP is bound by residues 167-169 (DAK), 233-234 (RF), D242, 248-249 (RK), A265, and K269. Residue D242 participates in L-methionine binding. Residue K273 coordinates L-methionine.

The protein belongs to the AdoMet synthase family. In terms of assembly, homotetramer; dimer of dimers. It depends on Mg(2+) as a cofactor. K(+) serves as cofactor.

It localises to the cytoplasm. The catalysed reaction is L-methionine + ATP + H2O = S-adenosyl-L-methionine + phosphate + diphosphate. Its pathway is amino-acid biosynthesis; S-adenosyl-L-methionine biosynthesis; S-adenosyl-L-methionine from L-methionine: step 1/1. Catalyzes the formation of S-adenosylmethionine (AdoMet) from methionine and ATP. The overall synthetic reaction is composed of two sequential steps, AdoMet formation and the subsequent tripolyphosphate hydrolysis which occurs prior to release of AdoMet from the enzyme. This Paraburkholderia phymatum (strain DSM 17167 / CIP 108236 / LMG 21445 / STM815) (Burkholderia phymatum) protein is S-adenosylmethionine synthase.